The primary structure comprises 284 residues: MPAAISRNWPAPAKLNLFLHINGRRADGYHALQTLFQFIDCCDMLDFKVTETPELILHSNMSGVVADSDNLILRAAKSLQQTTGFNGGAEIWLDKRLPMGGGLGGGSSDAATTLVALNKLWHTQLSTEELAKIGLKLGADIPVFIHGFAAFAEGVGERLQAVNPSEPWYLVIAPDAHVSTADVFQDPLLPRETPKLAIDTLMSQPWANDCQKLVVSKYPQVAKALGWLLEYAPSRMTGTGACVFGEFTQQQQALAALAKLPSEMQGFVAQGMNLSPLITRLSHP.

K14 is an active-site residue. 98–108 (PMGGGLGGGSS) serves as a coordination point for ATP. Residue D140 is part of the active site.

It belongs to the GHMP kinase family. IspE subfamily.

It carries out the reaction 4-CDP-2-C-methyl-D-erythritol + ATP = 4-CDP-2-C-methyl-D-erythritol 2-phosphate + ADP + H(+). It participates in isoprenoid biosynthesis; isopentenyl diphosphate biosynthesis via DXP pathway; isopentenyl diphosphate from 1-deoxy-D-xylulose 5-phosphate: step 3/6. In terms of biological role, catalyzes the phosphorylation of the position 2 hydroxy group of 4-diphosphocytidyl-2C-methyl-D-erythritol. The polypeptide is 4-diphosphocytidyl-2-C-methyl-D-erythritol kinase (Shewanella baltica (strain OS155 / ATCC BAA-1091)).